Consider the following 439-residue polypeptide: Xaa-Pro dipeptidase (439 aa).

5 residues coordinate Mn(2+): Asp244, Asp255, His335, Glu380, and Glu419.

The protein belongs to the peptidase M24B family. Bacterial-type prolidase subfamily. It depends on Mn(2+) as a cofactor.

The catalysed reaction is Xaa-L-Pro dipeptide + H2O = an L-alpha-amino acid + L-proline. Its function is as follows. Splits dipeptides with a prolyl residue in the C-terminal position. The chain is Xaa-Pro dipeptidase from Shewanella oneidensis (strain ATCC 700550 / JCM 31522 / CIP 106686 / LMG 19005 / NCIMB 14063 / MR-1).